Consider the following 385-residue polypeptide: Probable peptidoglycan glycosyltransferase FtsW (385 aa).

9 consecutive transmembrane segments (helical) span residues 18–38, 57–77, 81–101, 111–131, 157–177, 195–215, 280–300, 311–331, and 347–367; these read LLWTAILLALAGLVMVSSASL, IYLALGLGVGAFVYYAVPLAL, LRFVMLPVALVALVMVFIPGL, WIALPGLTIQASEIVKLCFVL, LLGVLMLLLLLEPDFGAVVVL, FLLIGLIAVALGGLVAFAEPY, LGLLGNVALIGGFILLGWRVF, LLYHAYLVYGCAFVFCSQAFI, and LPFISYGGSSLLISAVMVGLI.

Belongs to the SEDS family. FtsW subfamily.

The protein localises to the cell inner membrane. It carries out the reaction [GlcNAc-(1-&gt;4)-Mur2Ac(oyl-L-Ala-gamma-D-Glu-L-Lys-D-Ala-D-Ala)](n)-di-trans,octa-cis-undecaprenyl diphosphate + beta-D-GlcNAc-(1-&gt;4)-Mur2Ac(oyl-L-Ala-gamma-D-Glu-L-Lys-D-Ala-D-Ala)-di-trans,octa-cis-undecaprenyl diphosphate = [GlcNAc-(1-&gt;4)-Mur2Ac(oyl-L-Ala-gamma-D-Glu-L-Lys-D-Ala-D-Ala)](n+1)-di-trans,octa-cis-undecaprenyl diphosphate + di-trans,octa-cis-undecaprenyl diphosphate + H(+). It functions in the pathway cell wall biogenesis; peptidoglycan biosynthesis. Its function is as follows. Peptidoglycan polymerase that is essential for cell division. The polypeptide is Probable peptidoglycan glycosyltransferase FtsW (Alcanivorax borkumensis (strain ATCC 700651 / DSM 11573 / NCIMB 13689 / SK2)).